Consider the following 146-residue polypeptide: Flagellar assembly factor FliW 1 (146 aa).

It belongs to the FliW family. As to quaternary structure, interacts with translational regulator CsrA and flagellin(s).

The protein localises to the cytoplasm. Its function is as follows. Acts as an anti-CsrA protein, binds CsrA and prevents it from repressing translation of its target genes, one of which is flagellin. Binds to flagellin and participates in the assembly of the flagellum. The protein is Flagellar assembly factor FliW 1 of Helicobacter hepaticus (strain ATCC 51449 / 3B1).